The following is a 357-amino-acid chain: GTPase Obg (357 aa).

The Obg domain occupies Met1–Leu159. The region spanning Ala160–His334 is the OBG-type G domain. GTP-binding positions include Gly166 to Ser173, Phe191 to His195, Asp213 to Gly216, Asn284 to Asp287, and Ser315 to Leu317. Mg(2+) is bound by residues Ser173 and Thr193.

This sequence belongs to the TRAFAC class OBG-HflX-like GTPase superfamily. OBG GTPase family. Monomer. Mg(2+) serves as cofactor.

It localises to the cytoplasm. Its function is as follows. An essential GTPase which binds GTP, GDP and possibly (p)ppGpp with moderate affinity, with high nucleotide exchange rates and a fairly low GTP hydrolysis rate. Plays a role in control of the cell cycle, stress response, ribosome biogenesis and in those bacteria that undergo differentiation, in morphogenesis control. This chain is GTPase Obg, found in Acidovorax sp. (strain JS42).